We begin with the raw amino-acid sequence, 86 residues long: MAAEDTPQDIADRERIFKRFDTNGDGKISSSELGDALKTLGSVTPDEVRRMMAEIDTDGDGFISFDEFTDFARANRGLVKDVSKIF.

2 consecutive EF-hand domains span residues 8 to 43 (QDIA…LGSV) and 43 to 78 (VTPD…NRGL). 9 residues coordinate Ca(2+): aspartate 21, asparagine 23, aspartate 25, lysine 27, glutamate 32, aspartate 56, aspartate 58, aspartate 60, and glutamate 67.

This chain is Polcalcin Che a 3, found in Chenopodium album (Fat hen).